The chain runs to 208 residues: Uracil phosphoribosyltransferase (208 aa).

Residues arginine 78, arginine 103, and 130–138 (DPMLATGGS) each bind 5-phospho-alpha-D-ribose 1-diphosphate. Uracil contacts are provided by residues isoleucine 193 and 198 to 200 (GDA). Aspartate 199 serves as a coordination point for 5-phospho-alpha-D-ribose 1-diphosphate.

This sequence belongs to the UPRTase family. Mg(2+) is required as a cofactor.

The catalysed reaction is UMP + diphosphate = 5-phospho-alpha-D-ribose 1-diphosphate + uracil. The protein operates within pyrimidine metabolism; UMP biosynthesis via salvage pathway; UMP from uracil: step 1/1. With respect to regulation, allosterically activated by GTP. Functionally, catalyzes the conversion of uracil and 5-phospho-alpha-D-ribose 1-diphosphate (PRPP) to UMP and diphosphate. The sequence is that of Uracil phosphoribosyltransferase from Neisseria meningitidis serogroup B (strain ATCC BAA-335 / MC58).